We begin with the raw amino-acid sequence, 152 residues long: Cytochrome c-type biogenesis CcmH-like mitochondrial protein (152 aa).

Residues 1–83 (MATEEDVKQR…ILYTPKFDLQ (83 aa)) lie on the Mitochondrial intermembrane side of the membrane. The heme site is built by cysteine 26 and cysteine 29. Residues 84 to 104 (TAAIWLSPVIVGGVAAGVWAY) traverse the membrane as a helical segment. Over 105–152 (QKHRQRTNVHIMALNLVRGVPLTPREKETMLDVLTPPPPANKWWWPGK) the chain is Mitochondrial matrix.

The protein belongs to the CcmH/CycL/Ccl2/NrfF family.

The protein resides in the mitochondrion inner membrane. Plays a role in mitochondrial cytochrome c maturation. Probable component of a heme lyase complex involved in the reduction of apocytochrome c. The polypeptide is Cytochrome c-type biogenesis CcmH-like mitochondrial protein (Oryza sativa subsp. japonica (Rice)).